The chain runs to 332 residues: Ornithine carbamoyltransferase, catabolic (332 aa).

Carbamoyl phosphate-binding positions include 60–63, Q87, R111, and 138–141; these read STRT and HPTQ. L-ornithine is bound by residues N170, D230, and 234-235; that span reads SM. Carbamoyl phosphate-binding positions include 271 to 272 and R316; that span reads CL.

This sequence belongs to the aspartate/ornithine carbamoyltransferase superfamily. OTCase family.

The protein localises to the cytoplasm. It catalyses the reaction carbamoyl phosphate + L-ornithine = L-citrulline + phosphate + H(+). Its pathway is amino-acid degradation; L-arginine degradation via ADI pathway; carbamoyl phosphate from L-arginine: step 2/2. Its function is as follows. Reversibly catalyzes the transfer of the carbamoyl group from carbamoyl phosphate (CP) to the N(epsilon) atom of ornithine (ORN) to produce L-citrulline. This is Ornithine carbamoyltransferase, catabolic from Bacillus thuringiensis subsp. konkukian (strain 97-27).